A 311-amino-acid polypeptide reads, in one-letter code: Probable manganese-dependent inorganic pyrophosphatase (311 aa).

His-9, Asp-13, Asp-15, Asp-75, His-97, and Asp-149 together coordinate Mn(2+).

The protein belongs to the PPase class C family. Mn(2+) is required as a cofactor.

It is found in the cytoplasm. It carries out the reaction diphosphate + H2O = 2 phosphate + H(+). This is Probable manganese-dependent inorganic pyrophosphatase from Lactobacillus acidophilus (strain ATCC 700396 / NCK56 / N2 / NCFM).